Consider the following 21-residue polypeptide: GFMKYIGPLIPHAVKAISDLI.

At I21 the chain carries Isoleucine amide.

Expressed by the skin dorsal glands.

The protein resides in the secreted. Its function is as follows. Shows broad-spectrum antimicrobial activity against the Gram-negative bacterium E.coli (MIC=6.25 uM), K.pneumoniae (MIC=25 uM), E.cloacae (MIC=6.25 uM), P.aeruginosa (MIC=25 uM), the Gram-positive bacterium S.aureus (MIC=6.25 uM), S.epidermidis (MIC=6.25 uM), E.faecalis (MIC=12.5 uM), and the fungus C.albicans (MIC=100 uM). Has no antimicrobial effect against P.mirabilis (MIC&gt;100 uM). Has relatively high cytolytic and hemolytic activities. Its alpha-helix has considerable amphipathic character. This is Kassinatuerin-1 from Kassina senegalensis (Senegal running frog).